The chain runs to 453 residues: UDP-glycosyltransferase 79B3 (453 aa).

UDP-alpha-D-glucose is bound by residues S266, V325–Q327, H342–E350, and L364–Q367.

Belongs to the UDP-glycosyltransferase family.

The chain is UDP-glycosyltransferase 79B3 (UGT79B3) from Arabidopsis thaliana (Mouse-ear cress).